Here is a 410-residue protein sequence, read N- to C-terminus: MFTSQDARDSRPDRELRMMNDVLMTYPYTVIHLPAQNMLSTAKGMVNIAENYRDYPILAIFYVKYLMKKLPYGVIPVNLEWPEPYVVLNTILKRLKEHKFFANKDKEDFAERLHKLIAPDVSIPESRKDEILGQQKKERVVTKTINENFLDPVNARPRLQRFFEKLHNGTLVENLEVGLCKVEILVSSKAMLGQSFKLQIMAANVRELWVGEMVCNMITNETDYGFDEGGGDDDEGSSVEVQNSQSASPGQDQEAQRAPEAPETSSQLFDKIVSALQDDPDSAKAQLGQCRKLASYLLSHKREQEDFFMQTKDTRARLYLDLKGCLGSSWKFSIYRGVRCKQNGQLKVSLKPSNSGHLSGFWVNIKMTSQGNTLDDIRLQVRCDILGKDTNRRGGSEKDPEDQSETESSG.

Positions 225-237 (GFDEGGGDDDEGS) are enriched in acidic residues. 2 disordered regions span residues 225–264 (GFDE…APET) and 388–410 (KDTN…ESSG). The span at 239–253 (VEVQNSQSASPGQDQ) shows a compositional bias: polar residues. Basic and acidic residues predominate over residues 388-398 (KDTNRRGGSEK). The span at 399–410 (DPEDQSETESSG) shows a compositional bias: acidic residues.

Plasmid partition require REP1, REP2, and a cis-acting DNA sequence (known as STB). REP1 may act by intercalating in the yeast nuclear matrix and binding STB either directly or via REP2. The chain is Trans-acting factor B (P) from Zygosaccharomyces rouxii.